An 842-amino-acid polypeptide reads, in one-letter code: Elongation factor 2 (842 aa).

A tr-type G domain is found at 17 to 253 (TNVRNMSVIA…LWGDSYFNPK (237 aa)). Residues 26–33 (AHVDHGKS), 158–161 (NKVD), and 213–215 (SGL) contribute to the GTP site. At histidine 699 the chain carries Diphthamide.

This sequence belongs to the TRAFAC class translation factor GTPase superfamily. Classic translation factor GTPase family. EF-G/EF-2 subfamily.

The protein resides in the cytoplasm. It carries out the reaction GTP + H2O = GDP + phosphate + H(+). In terms of biological role, catalyzes the GTP-dependent ribosomal translocation step during translation elongation. During this step, the ribosome changes from the pre-translocational (PRE) to the post-translocational (POST) state as the newly formed A-site-bound peptidyl-tRNA and P-site-bound deacylated tRNA move to the P and E sites, respectively. Catalyzes the coordinated movement of the two tRNA molecules, the mRNA and conformational changes in the ribosome. This is Elongation factor 2 (EFT1) from Naumovozyma castellii (Yeast).